We begin with the raw amino-acid sequence, 232 residues long: Large ribosomal subunit protein uL1 (232 aa).

It belongs to the universal ribosomal protein uL1 family. In terms of assembly, part of the 50S ribosomal subunit.

Its function is as follows. Binds directly to 23S rRNA. The L1 stalk is quite mobile in the ribosome, and is involved in E site tRNA release. In terms of biological role, protein L1 is also a translational repressor protein, it controls the translation of the L11 operon by binding to its mRNA. The polypeptide is Large ribosomal subunit protein uL1 (Alkaliphilus oremlandii (strain OhILAs) (Clostridium oremlandii (strain OhILAs))).